We begin with the raw amino-acid sequence, 498 residues long: Lysine--tRNA ligase (498 aa).

Positions 408 and 415 each coordinate Mg(2+).

It belongs to the class-II aminoacyl-tRNA synthetase family. As to quaternary structure, homodimer. Requires Mg(2+) as cofactor.

The protein localises to the cytoplasm. It carries out the reaction tRNA(Lys) + L-lysine + ATP = L-lysyl-tRNA(Lys) + AMP + diphosphate. This chain is Lysine--tRNA ligase, found in Listeria monocytogenes serovar 1/2a (strain ATCC BAA-679 / EGD-e).